The following is a 209-amino-acid chain: NAD(P)H dehydrogenase (quinone) (209 aa).

The 196-residue stretch at 4–199 folds into the Flavodoxin-like domain; sequence VNIIFYSMYG…AMARYQGRHV (196 aa). FMN-binding positions include 10–15 and 87–89; these read SMYGHV and TRY. Y12 is an NAD(+) binding site. W107 serves as a coordination point for substrate. FMN contacts are provided by residues 122–128 and H143; that span reads SSGTQHG.

It belongs to the WrbA family. It depends on FMN as a cofactor.

It carries out the reaction a quinone + NADH + H(+) = a quinol + NAD(+). The catalysed reaction is a quinone + NADPH + H(+) = a quinol + NADP(+). This Methanosarcina acetivorans (strain ATCC 35395 / DSM 2834 / JCM 12185 / C2A) protein is NAD(P)H dehydrogenase (quinone).